The following is a 112-amino-acid chain: Colipase (112 aa).

The signal sequence occupies residues 1-17 (MEKILILLLVALSVAYA). The propeptide at 18-22 (APGPR) is enterostatin, activation peptide. 5 disulfides stabilise this stretch: cysteine 34–cysteine 45, cysteine 40–cysteine 56, cysteine 44–cysteine 78, cysteine 66–cysteine 86, and cysteine 80–cysteine 104.

This sequence belongs to the colipase family. Forms a 1:1 stoichiometric complex with pancreatic lipase. Expressed by the pancreas.

It localises to the secreted. In terms of biological role, colipase is a cofactor of pancreatic lipase. It allows the lipase to anchor itself to the lipid-water interface. Without colipase the enzyme is washed off by bile salts, which have an inhibitory effect on the lipase. Its function is as follows. Enterostatin has a biological activity as a satiety signal. The sequence is that of Colipase from Homo sapiens (Human).